A 180-amino-acid chain; its full sequence is Major urinary protein 6 (180 aa).

The signal sequence occupies residues 1–18 (MKMLLLLCLGLTLVCVHA). A disulfide bridge connects residues Cys82 and Cys175.

This sequence belongs to the calycin superfamily. Lipocalin family. In terms of tissue distribution, abundant in the urine of adult male mice but absent from that of females.

It localises to the secreted. Its function is as follows. Binds pheromones that are released from drying urine of males. These pheromones affect the sexual behavior of females. In Mus musculus (Mouse), this protein is Major urinary protein 6 (Mup6).